The chain runs to 112 residues: Transmembrane protein 14 homolog (112 aa).

The next 4 helical transmembrane spans lie at 9-26, 36-53, 60-77, and 87-109; these read FKLNAAMAAIVLSGGVIG, LIAGSVFGLLYSTSAYYL, VGLGVSVLASSLLGGVMG, and IPIILATGSAFTLLSSGKELYNI.

The protein belongs to the TMEM14 family.

The protein localises to the membrane. The sequence is that of Transmembrane protein 14 homolog from Dictyostelium discoideum (Social amoeba).